The following is a 118-amino-acid chain: Vacuolar ATPase assembly integral membrane protein vma-21 (118 aa).

Residues 1 to 35 are Cytoplasmic-facing; it reads MATRRIISQEKTLLEKDDRIGSSPAASEKSNITPA. The chain crosses the membrane as a helical span at residues 36-56; it reads VPASVIIKLLAFTFAMIVIPI. Topologically, residues 57-73 are lumenal; it reads SSYFLTVDRLFKGNSTY. A helical transmembrane segment spans residues 74–94; sequence AGATAAIMANVVLIGYIIVAM. The Cytoplasmic portion of the chain corresponds to 95–118; it reads AEDQSDQENEKKGGGGKGEGKKDL. The tract at residues 98–118 is disordered; the sequence is QSDQENEKKGGGGKGEGKKDL. Positions 102-118 are enriched in basic and acidic residues; the sequence is ENEKKGGGGKGEGKKDL. The Prevents secretion from ER motif lies at 115–118; it reads KKDL.

This sequence belongs to the VMA21 family.

Its subcellular location is the endoplasmic reticulum membrane. It localises to the endoplasmic reticulum-Golgi intermediate compartment membrane. The protein localises to the cytoplasmic vesicle. The protein resides in the COPII-coated vesicle membrane. Its function is as follows. Required for the assembly of the V0 complex of the vacuolar ATPase (V-ATPase) in the endoplasmic reticulum. The protein is Vacuolar ATPase assembly integral membrane protein vma-21 (vma-21) of Neurospora crassa (strain ATCC 24698 / 74-OR23-1A / CBS 708.71 / DSM 1257 / FGSC 987).